Consider the following 268-residue polypeptide: Bidirectional sugar transporter N3 (268 aa).

The Extracellular portion of the chain corresponds to 1–7; sequence MAISHNT. A helical transmembrane segment spans residues 8–28; that stretch reads LAFTFGMLGNVISFLVFLAPI. Residues 10–96 form the MtN3/slv 1 domain; that stretch reads FTFGMLGNVI…ILYIIYAPRD (87 aa). Residues 29-42 lie on the Cytoplasmic side of the membrane; sequence STFYRIYKKKSTEG. The helical transmembrane segment at 43-63 threads the bilayer; sequence FQSLPYLVALFSSMLWLYYAL. Residues 64–70 lie on the Extracellular side of the membrane; the sequence is LKKDAFL. Residues 71 to 91 traverse the membrane as a helical segment; that stretch reads LITINSFGCVVETIYIILYII. Over 92–103 the chain is Cytoplasmic; the sequence is YAPRDARNLTFK. Residues 104–124 form a helical membrane-spanning segment; it reads LLSAMNVGSFALILIVTNYAV. At 125-131 the chain is on the extracellular side; that stretch reads HGPLRVQ. Residues 131 to 214 form the MtN3/slv 2 domain; that stretch reads QVLGWVCVSL…QMLLYAIYRN (84 aa). A helical membrane pass occupies residues 132–152; the sequence is VLGWVCVSLSVSVFAAPLSIV. Topologically, residues 153–165 are cytoplasmic; sequence AQVVRTKSVEFMP. A helical transmembrane segment spans residues 166-186; it reads FNLSFTLTLSATMWFGYGFFL. At 187–190 the chain is on the extracellular side; it reads KDIC. The helical transmembrane segment at 191 to 211 threads the bilayer; the sequence is IXLPNVLGXVLGLLQMLLYAI. The Cytoplasmic segment spans residues 212–268; sequence YRNGGEKAMKKEKKAPIEPPKSIVIETQLEKIEQEKKNKDDDNEEKDKSEEPIGCGV. A coiled-coil region spans residues 234–262; the sequence is IVIETQLEKIEQEKKNKDDDNEEKDKSEE. The segment covering 243-262 has biased composition (basic and acidic residues); the sequence is IEQEKKNKDDDNEEKDKSEE. Positions 243-268 are disordered; sequence IEQEKKNKDDDNEEKDKSEEPIGCGV.

This sequence belongs to the SWEET sugar transporter family. Forms homooligomers and/or heterooligomers.

The protein resides in the cell membrane. Functionally, mediates both low-affinity uptake and efflux of sugar across the plasma membrane. This is Bidirectional sugar transporter N3 (N3) from Medicago truncatula (Barrel medic).